An 85-amino-acid polypeptide reads, in one-letter code: LYR motif-containing protein 5A (85 aa).

Belongs to the complex I LYR family.

The polypeptide is LYR motif-containing protein 5A (lyrm5a) (Danio rerio (Zebrafish)).